Here is a 507-residue protein sequence, read N- to C-terminus: Glycerol kinase (507 aa).

Thr-13 contributes to the ADP binding site. ATP is bound by residues Thr-13, Thr-14, and Ser-15. Residue Thr-13 coordinates sn-glycerol 3-phosphate. Arg-17 contributes to the ADP binding site. Residues Arg-83, Glu-84, Tyr-135, and Asp-245 each contribute to the sn-glycerol 3-phosphate site. Positions 83, 84, 135, 245, and 246 each coordinate glycerol. Residues Thr-267 and Gly-310 each contribute to the ADP site. Residues Thr-267, Gly-310, Gln-314, and Gly-411 each coordinate ATP. 2 residues coordinate ADP: Gly-411 and Asn-415.

This sequence belongs to the FGGY kinase family.

The catalysed reaction is glycerol + ATP = sn-glycerol 3-phosphate + ADP + H(+). Its pathway is polyol metabolism; glycerol degradation via glycerol kinase pathway; sn-glycerol 3-phosphate from glycerol: step 1/1. Its activity is regulated as follows. Inhibited by fructose 1,6-bisphosphate (FBP). Key enzyme in the regulation of glycerol uptake and metabolism. Catalyzes the phosphorylation of glycerol to yield sn-glycerol 3-phosphate. The polypeptide is Glycerol kinase (Halorhodospira halophila (strain DSM 244 / SL1) (Ectothiorhodospira halophila (strain DSM 244 / SL1))).